A 254-amino-acid polypeptide reads, in one-letter code: Nickel import ATP-binding protein NikD (254 aa).

Residues 2-241 (PQQIELRDIA…PKHAVTRSLV (240 aa)) enclose the ABC transporter domain. Residue 36 to 43 (GGSGSGKS) coordinates ATP.

Belongs to the ABC transporter superfamily. Nickel importer (TC 3.A.1.5.3) family. In terms of assembly, the complex is composed of two ATP-binding proteins (NikD and NikE), two transmembrane proteins (NikB and NikC) and a solute-binding protein (NikA).

The protein resides in the cell inner membrane. The catalysed reaction is Ni(2+)(out) + ATP + H2O = Ni(2+)(in) + ADP + phosphate + H(+). In terms of biological role, part of the ABC transporter complex NikABCDE involved in nickel import. Responsible for energy coupling to the transport system. This Shigella dysenteriae serotype 1 (strain Sd197) protein is Nickel import ATP-binding protein NikD.